The sequence spans 769 residues: Integrin beta-2 (769 aa).

The first 22 residues, M1–S22, serve as a signal peptide directing secretion. Q23 carries the post-translational modification Pyrrolidone carboxylic acid. Residues Q23–N700 lie on the Extracellular side of the membrane. A PSI domain is found at E24–V74. 28 disulfide bridges follow: C25/C43, C33/C447, C36/C62, C46/C73, C191/C198, C246/C286, C386/C400, C420/C445, C449/C467, C459/C470, C472/C481, C483/C514, C497/C512, C506/C517, C519/C534, C536/C559, C541/C557, C549/C562, C564/C573, C575/C598, C582/C596, C590/C601, C603/C612, C615/C618, C622/C662, C628/C647, C631/C643, and C670/C695. N-linked (GlcNAc...) asparagine glycosylation is found at N50 and N116. Residues G124–L363 enclose the VWFA domain. Residues S136 and S138 each contribute to the Mg(2+) site. Residues S138, D141, D142, and D173 each contribute to the Ca(2+) site. Ca(2+) is bound by residues N229, D231, P233, and E234. E234 provides a ligand contact to Mg(2+). An N-linked (GlcNAc...) asparagine glycan is attached at N254. 2 residues coordinate Ca(2+): D264 and E347. The Cell attachment site signature appears at R397–D399. I-EGF domains follow at residues C449–E482, C483–E535, C536–Q574, and C575–T613. Residue N501 is glycosylated (N-linked (GlcNAc...) asparagine). N642 carries N-linked (GlcNAc...) asparagine glycosylation. The helical transmembrane segment at I701–W723 threads the bilayer. The Cytoplasmic portion of the chain corresponds to K724–R769. S745 and S756 each carry phosphoserine. Residues T758 and T760 each carry the phosphothreonine modification.

Belongs to the integrin beta chain family. In terms of assembly, heterodimer of an alpha and a beta subunit. The ITGB2 beta subunit associates with the ITGAL, ITGAM, ITGAX or ITGAD alpha subunits. Found in a complex with CD177 and ITGAM/CD11b. Interacts with FGR. Interacts with COPS5 and RANBP9. Interacts with FLNA (via filamin repeats 4, 9, 12, 17, 19, 21, and 23). Interacts with THBD. Both Ser-745 and Ser-756 become phosphorylated when T-cells are exposed to phorbol esters. Phosphorylation on Thr-758 (but not on Ser-756) allows interaction with 14-3-3 proteins.

It is found in the cell membrane. The protein localises to the membrane raft. Integrin ITGAL/ITGB2 is a receptor for ICAM1, ICAM2, ICAM3 and ICAM4. Integrin ITGAL/ITGB2 is also a receptor for the secreted form of ubiquitin-like protein ISG15; the interaction is mediated by ITGAL. Integrins ITGAM/ITGB2 and ITGAX/ITGB2 are receptors for the iC3b fragment of the third complement component and for fibrinogen. Integrin ITGAX/ITGB2 recognizes the sequence G-P-R in fibrinogen alpha-chain. Integrin ITGAM/ITGB2 recognizes P1 and P2 peptides of fibrinogen gamma chain. Integrin ITGAM/ITGB2 is also a receptor for factor X. Integrin ITGAD/ITGB2 is a receptor for ICAM3 and VCAM1. Contributes to natural killer cell cytotoxicity. Involved in leukocyte adhesion and transmigration of leukocytes including T-cells and neutrophils. Triggers neutrophil transmigration during lung injury through PTK2B/PYK2-mediated activation. Integrin alpha-L/beta-2 in association with ICAM3, contributes to apoptotic neutrophil phagocytosis by macrophages. The chain is Integrin beta-2 (ITGB2) from Sus scrofa (Pig).